The following is a 218-amino-acid chain: Ohanin-like protein (218 aa).

An N-terminal signal peptide occupies residues 1–40; sequence MSPSAGFQFSLYFLQTKKVLWKLTGLCYILLFTLCFFADQ. Positions 41–48 are excised as a propeptide; it reads ENGGKALA. In terms of domain architecture, B30.2/SPRY spans 49-155; sequence SPPGIWKRAD…RIWQTGLWWL (107 aa). The propeptide occupies 156-218; it reads RHLETDPGRV…LGGTVSLTTL (63 aa).

This sequence belongs to the ohanin/vespryn family. As to expression, expressed by the venom gland.

Its subcellular location is the secreted. Functionally, neurotoxin that produces dose-dependent hypolocomotion and hyperalgesia in mice. May directly act on the central nervous system, as it is 6500-fold more potent when administered intracerebroventricularly than intraperitoneal. The sequence is that of Ohanin-like protein from Lachesis muta muta (Bushmaster).